Here is a 1929-residue protein sequence, read N- to C-terminus: Myoferlin (1929 aa).

Residues 1–53 (MISYEPPPSAISNPTDPGGTTIIQGDGENDEEEDRDIVDAGFNPSVPGAPGQT) are disordered. Residues 27–36 (GENDEEEDRD) are compositionally biased toward acidic residues. 2 consecutive C2 domains span residues 62–179 (VKGK…RKWV) and 218–354 (EDDD…EEYD). Asp-267, Asp-275, Asp-323, Asp-325, and Asp-331 together coordinate Ca(2+). The segment covering 898–907 (RRLVRKRKKD) has biased composition (basic residues). The tract at residues 898 to 918 (RRLVRKRKKDPKVSTTSKAAL) is disordered. C2 domains follow at residues 996-1124 (GANT…LLWY), 1159-1283 (RAPQ…TKHE), 1408-1527 (IPYP…SHCG), and 1645-1793 (GPPG…EKCS). Asp-1028, Asp-1034, Asp-1090, and Asp-1092 together coordinate Ca(2+). Ca(2+)-binding residues include Asp-1442, Asp-1448, Asp-1497, Asp-1499, Asp-1764, Ser-1767, and Asp-1770. Residues 1845-1858 (DAEERPAGKGRDEP) are compositionally biased toward basic and acidic residues. The interval 1845-1867 (DAEERPAGKGRDEPNMNPKLDPP) is disordered. A helical membrane pass occupies residues 1894–1914 (WVFIGLIILLLVLLFLGVFFY).

This sequence belongs to the ferlin family. Ca(2+) is required as a cofactor.

The protein resides in the cell membrane. It is found in the nucleus membrane. The protein localises to the cytoplasmic vesicle membrane. Functionally, may play a role in membrane regeneration and repair. This Xenopus tropicalis (Western clawed frog) protein is Myoferlin (myof).